The following is a 367-amino-acid chain: Apolipoprotein A-V (367 aa).

A signal peptide spans Met1–Ala20. Ser52 is modified (phosphoserine). Residues Thr231–Phe255 are a coiled coil. The interval Glu305–Lys332 is disordered.

The protein belongs to the apolipoprotein A1/A4/E family. As to quaternary structure, interacts with GPIHBP1. Interacts with SORL1; this interaction leads to APOA5 internalization and sorting either to lysosomes and degradation, or to the trans-Golgi network. Post-translationally, phosphorylated by FAM20C in the extracellular medium. As to expression, liver.

It localises to the secreted. It is found in the early endosome. Its subcellular location is the late endosome. The protein localises to the golgi apparatus. The protein resides in the trans-Golgi network. In terms of biological role, minor apolipoprotein mainly associated with HDL and to a lesser extent with VLDL. May also be associated with chylomicrons. Important determinant of plasma triglyceride (TG) levels by both being a potent stimulator of apo-CII lipoprotein lipase (LPL) TG hydrolysis and an inhibitor of the hepatic VLDL-TG production rate (without affecting the VLDL-apoB production rate). Activates poorly lecithin:cholesterol acyltransferase (LCAT) and does not enhance efflux of cholesterol from macrophages. Binds heparin. The protein is Apolipoprotein A-V (Apoa5) of Rattus norvegicus (Rat).